A 309-amino-acid chain; its full sequence is Probable manganese-dependent inorganic pyrophosphatase (309 aa).

The Mn(2+) site is built by His-9, Asp-13, Asp-15, Asp-75, His-97, and Asp-149.

This sequence belongs to the PPase class C family. It depends on Mn(2+) as a cofactor.

The protein resides in the cytoplasm. The enzyme catalyses diphosphate + H2O = 2 phosphate + H(+). The chain is Probable manganese-dependent inorganic pyrophosphatase from Bacillus velezensis (strain DSM 23117 / BGSC 10A6 / LMG 26770 / FZB42) (Bacillus amyloliquefaciens subsp. plantarum).